Consider the following 260-residue polypeptide: tRNA pseudouridine synthase A (260 aa).

Catalysis depends on Asp60, which acts as the Nucleophile. Position 118 (Tyr118) interacts with substrate.

Belongs to the tRNA pseudouridine synthase TruA family. Homodimer.

The catalysed reaction is uridine(38/39/40) in tRNA = pseudouridine(38/39/40) in tRNA. Formation of pseudouridine at positions 38, 39 and 40 in the anticodon stem and loop of transfer RNAs. In Leuconostoc citreum (strain KM20), this protein is tRNA pseudouridine synthase A.